Here is a 189-residue protein sequence, read N- to C-terminus: Apolipoprotein D (189 aa).

Residues 1 to 20 (MATMLLLLATLAGLFTTTEG) form the signal peptide. Glutamine 21 is subject to Pyrrolidone carboxylic acid. 2 disulfides stabilise this stretch: cysteine 28-cysteine 134 and cysteine 61-cysteine 185. N-linked (GlcNAc...) asparagine glycans are attached at residues asparagine 65 and asparagine 98.

It belongs to the calycin superfamily. Lipocalin family. As to quaternary structure, homodimer. In terms of tissue distribution, expressed in liver, kidney, bladder, adrenal, cerebrum, duodenum, testis, lung, spleen, pancreas, heart and skin.

Its subcellular location is the secreted. Its function is as follows. APOD occurs in the macromolecular complex with lecithin-transport and binding of bilin. Appears to be able to transport a variety of ligands in a number of different contexts. This Rattus norvegicus (Rat) protein is Apolipoprotein D (Apod).